A 495-amino-acid chain; its full sequence is Probable cytosol aminopeptidase (495 aa).

Residues lysine 266 and aspartate 271 each contribute to the Mn(2+) site. Lysine 278 is a catalytic residue. 3 residues coordinate Mn(2+): aspartate 289, aspartate 348, and glutamate 350. Residue arginine 352 is part of the active site.

Belongs to the peptidase M17 family. Mn(2+) serves as cofactor.

It is found in the cytoplasm. The enzyme catalyses Release of an N-terminal amino acid, Xaa-|-Yaa-, in which Xaa is preferably Leu, but may be other amino acids including Pro although not Arg or Lys, and Yaa may be Pro. Amino acid amides and methyl esters are also readily hydrolyzed, but rates on arylamides are exceedingly low.. It carries out the reaction Release of an N-terminal amino acid, preferentially leucine, but not glutamic or aspartic acids.. Functionally, presumably involved in the processing and regular turnover of intracellular proteins. Catalyzes the removal of unsubstituted N-terminal amino acids from various peptides. The polypeptide is Probable cytosol aminopeptidase (Pseudomonas aeruginosa (strain LESB58)).